Reading from the N-terminus, the 172-residue chain is Myosin regulatory light chain 12B (172 aa).

Residues 1–16 show a composition bias toward basic residues; sequence MSSKKAKTKTTKKRPQ. A disordered region spans residues 1 to 20; sequence MSSKKAKTKTTKKRPQRATS. T19 bears the Phosphothreonine; by MLCK and ZIPK/DAPK3 mark. S20 bears the Phosphoserine; by MLCK and ZIPK/DAPK3 mark. 3 consecutive EF-hand domains span residues 29–64, 98–133, and 134–169; these read SQIQ…LGKN, DPED…MGDR, and FTDE…GAKD. 4 residues coordinate Ca(2+): D42, N44, D46, and D53.

In terms of assembly, myosin is a hexamer of 2 heavy chains and 4 light chains: interacts with myosin heavy chain MYO19. Phosphorylation increases the actin-activated myosin ATPase activity and thereby regulates the contractile activity. It is required to generate the driving force in the migration of the cells but not necessary for localization of myosin-2 at the leading edge. Phosphorylation is reduced following epigallocatechin-3-O-gallate treatment. Ubiquitously expressed in various hematopoietic cells.

In terms of biological role, myosin regulatory subunit that plays an important role in regulation of both smooth muscle and nonmuscle cell contractile activity via its phosphorylation. Phosphorylation triggers actin polymerization in vascular smooth muscle. Implicated in cytokinesis, receptor capping, and cell locomotion. The polypeptide is Myosin regulatory light chain 12B (MYL12B) (Homo sapiens (Human)).